A 349-amino-acid polypeptide reads, in one-letter code: Histone-lysine N-methyltransferase ATXR6 (349 aa).

The tract at residues 1-28 (MVAVRRRRTQASNPRSEPPQHMSDHDSD) is disordered. The PHD-type zinc-finger motif lies at 32 to 82 (DTVCEECSSGKQPAKLLLCDKCDKGFHLFCLRPILVSVPKGSWFCPSCSKH). The PIP motif signature appears at 92–99 (QTKIIDFF). The tract at residues 105–126 (PDSSQISSSSDSIGKKRKKTSL) is disordered. Residues 106-116 (DSSQISSSSDS) show a composition bias toward low complexity. A substrate-binding site is contributed by Met-190. The 124-residue stretch at 214–337 (PPLMVVFDPY…KGERLYYDYN (124 aa)) folds into the SET domain. S-adenosyl-L-methionine is bound by residues 224 to 226 (EGF) and 287 to 291 (RFISG). Substrate is bound by residues Arg-309 and 339–340 (YE). Residues Tyr-343 and Val-349 each coordinate S-adenosyl-L-methionine.

The protein belongs to the class V-like SAM-binding methyltransferase superfamily. Histone-lysine methyltransferase family. TRX/MLL subfamily. In terms of assembly, interacts with PCNA1 and PCNA2. Interacts (via PHD domain) with HTR1 (via N-terminus). Interacts with IPS1. As to expression, expressed in leaves, roots, stems, flowers and siliques. Up-regulated in tissues where cell division is active.

It localises to the nucleus. It carries out the reaction L-lysyl(27)-[histone H3] + S-adenosyl-L-methionine = N(6)-methyl-L-lysyl(27)-[histone H3] + S-adenosyl-L-homocysteine + H(+). Histone methyltransferase that specifically monomethylates 'Lys-27' of histone H3 (H3K27me1). Has higher activity on nucleosomes containing H3.1 than H3.3. Involved in the formation of constitutive heterochromatin and the silencing of heterochromatic elements. May act as a positive regulator of the G1-S transition. Influences which sets of rRNA gene variants are expressed or silenced. Up-regulated by E2FB. This chain is Histone-lysine N-methyltransferase ATXR6 (ATXR6), found in Arabidopsis thaliana (Mouse-ear cress).